Reading from the N-terminus, the 857-residue chain is DNA mismatch repair protein MutS (857 aa).

G621–S628 contacts ATP.

This sequence belongs to the DNA mismatch repair MutS family.

Its function is as follows. This protein is involved in the repair of mismatches in DNA. It is possible that it carries out the mismatch recognition step. This protein has a weak ATPase activity. This chain is DNA mismatch repair protein MutS, found in Francisella tularensis subsp. tularensis (strain SCHU S4 / Schu 4).